The chain runs to 22 residues: Alpha-amylase inhibitor DR4 (22 aa).

The interval 1–22 (SGGGKEAAETFNRVESHPRPDA) is disordered.

Inhibits insect alpha-amylases. This is Alpha-amylase inhibitor DR4 from Delonix regia (Royal poinciana).